The primary structure comprises 242 residues: uncharacterized protein (242 aa).

Residues 1-11 (MNFEAASAPSQ) show a composition bias toward low complexity. The disordered stretch occupies residues 1-45 (MNFEAASAPSQQPSPTPAPKTEEPKENGGSEQQADQPENSKKDDV).

To U.parvum UU171.

This is an uncharacterized protein from Ureaplasma parvum serovar 3 (strain ATCC 700970).